We begin with the raw amino-acid sequence, 295 residues long: sn-glycerol-3-phosphate transport system permease protein UgpA (295 aa).

Topologically, residues 1–11 are cytoplasmic; it reads MSSSRPVFRSR. Residues 12 to 32 traverse the membrane as a helical segment; that stretch reads WLPYLLVAPQLIITVIFFIWP. At 33-80 the chain is on the periplasmic side; sequence AGEALWYSLQSVDPFGFSSQFVGLDNFVTLFHDSYYLDAFWTTIKFST. Positions 76-284 constitute an ABC transmembrane type-1 domain; the sequence is IKFSTFVTVS…FLVIVLTVVQ (209 aa). A helical transmembrane segment spans residues 81-101; sequence FVTVSGLLVSLFFAALVEYIV. Topologically, residues 102 to 109 are cytoplasmic; sequence RGSRFYQT. The chain crosses the membrane as a helical span at residues 110–130; that stretch reads LMLLPYAVAPAVAAVLWIFLF. Residues 131–156 are Periplasmic-facing; the sequence is NPGRGLITHFLAEFGYDWNHAQNSGQ. The chain crosses the membrane as a helical span at residues 157 to 177; that stretch reads AMFLVVFASVWKQISYNFLFF. Residues 178–207 are Cytoplasmic-facing; that stretch reads YAALQSIPRSLIEAAAIDGAGPIRRFFKIA. Residues 208 to 228 form a helical membrane-spanning segment; that stretch reads LPLIAPVSFFLLVVNLVYAFF. Over 229 to 262 the chain is Periplasmic; the sequence is DTFPVIDAATSGGPVQATTTLIYKIYREGFTGLD. A helical transmembrane segment spans residues 263 to 283; the sequence is LASSAAQSVVLMFLVIVLTVV. Residues 284-295 are Cytoplasmic-facing; sequence QFRYVESKVRYQ.

This sequence belongs to the binding-protein-dependent transport system permease family. UgpAE subfamily. In terms of assembly, the complex is composed of two ATP-binding proteins (UgpC), two transmembrane proteins (UgpA and UgpE) and a solute-binding protein (UgpB).

It is found in the cell inner membrane. Functionally, part of the ABC transporter complex UgpBAEC involved in sn-glycerol-3-phosphate (G3P) import. Probably responsible for the translocation of the substrate across the membrane. The sequence is that of sn-glycerol-3-phosphate transport system permease protein UgpA (ugpA) from Escherichia coli (strain UTI89 / UPEC).